We begin with the raw amino-acid sequence, 236 residues long: Small ribosomal subunit protein uS3c (236 aa).

The KH type-2 domain maps to 47 to 127 (VRKYVRSSSR…KLNMTLSQVA (81 aa)).

Belongs to the universal ribosomal protein uS3 family. In terms of assembly, part of the 30S ribosomal subunit.

It is found in the plastid. The protein resides in the chloroplast. This is Small ribosomal subunit protein uS3c (rps3) from Zygnema circumcarinatum (Green alga).